The primary structure comprises 241 residues: 1-(5-phosphoribosyl)-5-[(5-phosphoribosylamino)methylideneamino] imidazole-4-carboxamide isomerase (241 aa).

The active-site Proton acceptor is aspartate 10. Aspartate 129 serves as the catalytic Proton donor.

This sequence belongs to the HisA/HisF family.

The protein localises to the cytoplasm. It catalyses the reaction 1-(5-phospho-beta-D-ribosyl)-5-[(5-phospho-beta-D-ribosylamino)methylideneamino]imidazole-4-carboxamide = 5-[(5-phospho-1-deoxy-D-ribulos-1-ylimino)methylamino]-1-(5-phospho-beta-D-ribosyl)imidazole-4-carboxamide. It participates in amino-acid biosynthesis; L-histidine biosynthesis; L-histidine from 5-phospho-alpha-D-ribose 1-diphosphate: step 4/9. In Salinispora tropica (strain ATCC BAA-916 / DSM 44818 / JCM 13857 / NBRC 105044 / CNB-440), this protein is 1-(5-phosphoribosyl)-5-[(5-phosphoribosylamino)methylideneamino] imidazole-4-carboxamide isomerase.